The chain runs to 127 residues: Large ribosomal subunit protein bL17 (127 aa).

The protein belongs to the bacterial ribosomal protein bL17 family. In terms of assembly, part of the 50S ribosomal subunit. Contacts protein L32.

The sequence is that of Large ribosomal subunit protein bL17 from Lactobacillus gasseri (strain ATCC 33323 / DSM 20243 / BCRC 14619 / CIP 102991 / JCM 1131 / KCTC 3163 / NCIMB 11718 / NCTC 13722 / AM63).